A 122-amino-acid chain; its full sequence is Large ribosomal subunit protein uL14c (122 aa).

Belongs to the universal ribosomal protein uL14 family. Part of the 50S ribosomal subunit.

It is found in the plastid. Functionally, binds to 23S rRNA. This is Large ribosomal subunit protein uL14c from Cuscuta obtusiflora (Peruvian dodder).